We begin with the raw amino-acid sequence, 3169 residues long: FRAS1-related extracellular matrix protein 2 (3169 aa).

The disordered stretch occupies residues 1–24; the sequence is MHSAGTPGLSSRRTGNSTSFQPGP. Residues 1–46 form the signal peptide; sequence MHSAGTPGLSSRRTGNSTSFQPGPPPPPRLLLLLLLLLSLVSRVPA. Residues 8–21 are compositionally biased toward polar residues; the sequence is GLSSRRTGNSTSFQ. The Extracellular portion of the chain corresponds to 47 to 3113; it reads QPAAFGRALL…SPSSAVSLVT (3067 aa). CSPG repeat units follow at residues 319–413, 438–537, 560–675, 700–807, 828–919, 945–1037, 1066–1168, 1189–1282, 1303–1399, 1420–1512, 1532–1621, and 1655–1752; these read KPSF…LELE, APVV…LRMV, PPVL…FRVQ, PPEL…FQVE, QPPE…LEVS, HPTG…LSLS, APEI…FRCS, EQPE…IKLT, TPRM…FDVT, VFPD…FQVT, KKPV…FTVT, and VPQI…FAVE. Asparagine 358 is a glycosylation site (N-linked (GlcNAc...) asparagine). N-linked (GlcNAc...) asparagine glycans are attached at residues asparagine 1244 and asparagine 1369. Residues asparagine 1584 and asparagine 1741 are each glycosylated (N-linked (GlcNAc...) asparagine). 5 Calx-beta domains span residues 1759–1858, 1871–1982, 1997–2103, 2118–2220, and 2238–2342; these read LTYQ…VVLS, ATVE…VLLS, QVTI…LVLR, VSIN…LVLG, and TLIR…VHLK. The tract at residues 3036–3057 is disordered; sequence SLVSQGKPQSTTKSRKKREIRS. The segment covering 3037–3047 has biased composition (polar residues); the sequence is LVSQGKPQSTT. A helical membrane pass occupies residues 3114 to 3134; it reads VVGGTTVGLLTICLTVIAVLM. Residues 3135 to 3169 are Cytoplasmic-facing; the sequence is CRGKESFRGKDAPKGSSSSEPMVPPQSHHNDSSEV. The disordered stretch occupies residues 3141–3169; sequence FRGKDAPKGSSSSEPMVPPQSHHNDSSEV.

It belongs to the FRAS1 family. Interacts with FREM1.

It localises to the cell membrane. Functionally, extracellular matrix protein required for maintenance of the integrity of the skin epithelium and for maintenance of renal epithelia. Required for epidermal adhesion. Involved in the development of eyelids and the anterior segment of the eyeballs. The sequence is that of FRAS1-related extracellular matrix protein 2 (FREM2) from Homo sapiens (Human).